The following is a 448-amino-acid chain: Phosphoglucosamine mutase (448 aa).

Ser102 (phosphoserine intermediate) is an active-site residue. Residues Ser102, Asp241, Asp243, and Asp245 each coordinate Mg(2+). The residue at position 102 (Ser102) is a Phosphoserine.

This sequence belongs to the phosphohexose mutase family. It depends on Mg(2+) as a cofactor. Post-translationally, activated by phosphorylation.

It catalyses the reaction alpha-D-glucosamine 1-phosphate = D-glucosamine 6-phosphate. Its function is as follows. Catalyzes the conversion of glucosamine-6-phosphate to glucosamine-1-phosphate. This is Phosphoglucosamine mutase from Ruegeria pomeroyi (strain ATCC 700808 / DSM 15171 / DSS-3) (Silicibacter pomeroyi).